We begin with the raw amino-acid sequence, 92 residues long: DNA-directed RNA polymerase subunit omega (92 aa).

The protein belongs to the RNA polymerase subunit omega family. As to quaternary structure, the RNAP catalytic core consists of 2 alpha, 1 beta, 1 beta' and 1 omega subunit. When a sigma factor is associated with the core the holoenzyme is formed, which can initiate transcription.

It carries out the reaction RNA(n) + a ribonucleoside 5'-triphosphate = RNA(n+1) + diphosphate. Its function is as follows. Promotes RNA polymerase assembly. Latches the N- and C-terminal regions of the beta' subunit thereby facilitating its interaction with the beta and alpha subunits. The sequence is that of DNA-directed RNA polymerase subunit omega from Shewanella sp. (strain ANA-3).